We begin with the raw amino-acid sequence, 189 residues long: Peptidyl-tRNA hydrolase (189 aa).

Tyr-16 is a binding site for tRNA. Residue His-21 is the Proton acceptor of the active site. Positions 67, 69, and 115 each coordinate tRNA.

This sequence belongs to the PTH family. Monomer.

It localises to the cytoplasm. The enzyme catalyses an N-acyl-L-alpha-aminoacyl-tRNA + H2O = an N-acyl-L-amino acid + a tRNA + H(+). In terms of biological role, hydrolyzes ribosome-free peptidyl-tRNAs (with 1 or more amino acids incorporated), which drop off the ribosome during protein synthesis, or as a result of ribosome stalling. Its function is as follows. Catalyzes the release of premature peptidyl moieties from peptidyl-tRNA molecules trapped in stalled 50S ribosomal subunits, and thus maintains levels of free tRNAs and 50S ribosomes. In Legionella pneumophila (strain Corby), this protein is Peptidyl-tRNA hydrolase.